A 440-amino-acid chain; its full sequence is Serine hydroxymethyltransferase (440 aa).

Position 123–125 (123–125) interacts with (6S)-5,6,7,8-tetrahydrofolate; it reads GHI. Position 238 is an N6-(pyridoxal phosphate)lysine (Lys-238).

It belongs to the SHMT family. Homodimer. Requires pyridoxal 5'-phosphate as cofactor.

The protein localises to the cytoplasm. The protein operates within amino-acid biosynthesis; glycine biosynthesis; glycine from L-serine: step 1/1. Functionally, catalyzes the reversible interconversion of serine and glycine with a modified folate serving as the one-carbon carrier. Also exhibits a pteridine-independent aldolase activity toward beta-hydroxyamino acids, producing glycine and aldehydes, via a retro-aldol mechanism. This Nitrosopumilus maritimus (strain SCM1) protein is Serine hydroxymethyltransferase.